The chain runs to 446 residues: uncharacterized protein (446 aa).

Positions 141–282 (TEAETNGTRP…GPKPKVKRVS (142 aa)) are disordered. The span at 159–170 (NSGSKPKAGTQS) shows a compositional bias: polar residues. Residues 194 to 210 (IKSERRSISQGGEKDKA) are compositionally biased toward basic and acidic residues. Ser-200, Ser-202, Ser-212, and Ser-214 each carry phosphoserine. 2 stretches are compositionally biased toward low complexity: residues 211–221 (SSSSPSSSQQS) and 229–239 (SPSQQNSRSSS). Ser-251 is subject to Phosphoserine. The span at 269–280 (GKSRGPKPKVKR) shows a compositional bias: basic residues. Ser-282 and Ser-307 each carry phosphoserine.

This is an uncharacterized protein from Drosophila melanogaster (Fruit fly).